Here is an 82-residue protein sequence, read N- to C-terminus: uncharacterized protein (82 aa).

Its subcellular location is the plastid. It localises to the chloroplast. This is an uncharacterized protein from Vicia faba (Broad bean).